The sequence spans 372 residues: NADH-quinone oxidoreductase subunit H (372 aa).

The next 8 membrane-spanning stretches (helical) occupy residues 34-54 (LPLG…LYAL), 106-126 (FLFV…FAVL), 139-159 (VGLF…LAAG), 178-198 (IVSY…MAGT), 217-237 (FFLF…IASL), 269-289 (VIFL…AIVF), 313-333 (VWGA…QMWL), and 352-372 (VLTP…IYVP).

It belongs to the complex I subunit 1 family. As to quaternary structure, NDH-1 is composed of 14 different subunits. Subunits NuoA, H, J, K, L, M, N constitute the membrane sector of the complex.

The protein localises to the cell inner membrane. The catalysed reaction is a quinone + NADH + 5 H(+)(in) = a quinol + NAD(+) + 4 H(+)(out). In terms of biological role, NDH-1 shuttles electrons from NADH, via FMN and iron-sulfur (Fe-S) centers, to quinones in the respiratory chain. The immediate electron acceptor for the enzyme in this species is believed to be ubiquinone. Couples the redox reaction to proton translocation (for every two electrons transferred, four hydrogen ions are translocated across the cytoplasmic membrane), and thus conserves the redox energy in a proton gradient. This subunit may bind ubiquinone. The protein is NADH-quinone oxidoreductase subunit H of Chlorobium luteolum (strain DSM 273 / BCRC 81028 / 2530) (Pelodictyon luteolum).